The sequence spans 171 residues: uncharacterized protein (171 aa).

The tract at residues 139–171 (ARKPTKSDDEEEEVGKMGGISSSINSWVQRQKL) is disordered. Residues 158 to 171 (ISSSINSWVQRQKL) are compositionally biased toward polar residues.

This is an uncharacterized protein from Caenorhabditis elegans.